The primary structure comprises 162 residues: Caveolin-2 (162 aa).

Residues 1–86 (MGLETEKADV…FEISKYVMYK (86 aa)) are Cytoplasmic-facing. At Tyr19 the chain carries Phosphotyrosine. A phosphoserine mark is found at Ser20 and Ser36. The segment at residues 87 to 107 (FLTVFLAIPLAFVAGILFATL) is an intramembrane region (helical). At 108–162 (SCLHIWIIMPFVKTCLMVLPSVQTIWKSVTDVIIAPLCTSVGRSFSSISLQLSHD) the chain is on the cytoplasmic side.

The protein belongs to the caveolin family. In terms of assembly, homodimer. Caveolin-1 and -2 colocalize and form a stable hetero-oligomeric complex.

The protein localises to the golgi apparatus membrane. It localises to the cell membrane. The protein resides in the membrane. It is found in the caveola. In terms of biological role, may act as a scaffolding protein within caveolar membranes. Interacts directly with G-protein alpha subunits and can functionally regulate their activity. Caveolin-2 may function as an accessory protein in conjunction with caveolin-1. The polypeptide is Caveolin-2 (CAV2) (Microcebus murinus (Gray mouse lemur)).